The primary structure comprises 479 residues: UDP-N-acetylmuramate--L-alanine ligase (479 aa).

128-134 (GAHGKTT) is a binding site for ATP.

It belongs to the MurCDEF family.

Its subcellular location is the cytoplasm. The enzyme catalyses UDP-N-acetyl-alpha-D-muramate + L-alanine + ATP = UDP-N-acetyl-alpha-D-muramoyl-L-alanine + ADP + phosphate + H(+). Its pathway is cell wall biogenesis; peptidoglycan biosynthesis. In terms of biological role, cell wall formation. The sequence is that of UDP-N-acetylmuramate--L-alanine ligase from Psychrobacter cryohalolentis (strain ATCC BAA-1226 / DSM 17306 / VKM B-2378 / K5).